The chain runs to 179 residues: Interleukin-22b (179 aa).

Residues 1 to 33 form the signal peptide; that stretch reads MAVLQKSMSFSLMGTLAASCLLLIALWAQEANA. Disulfide bonds link Cys-40–Cys-132 and Cys-89–Cys-178. N-linked (GlcNAc...) asparagine glycans are attached at residues Asn-54, Asn-68, and Asn-97.

This sequence belongs to the IL-10 family.

Its subcellular location is the secreted. Its function is as follows. Cytokine that contributes to the inflammatory response in vivo. The sequence is that of Interleukin-22b from Mus musculus (Mouse).